Reading from the N-terminus, the 303-residue chain is Probable cell division protein WhiA (303 aa).

The H-T-H motif DNA-binding region spans 272–303 (SIQQVADALEFPITKSGVNHRLRKINKIADDL).

This sequence belongs to the WhiA family.

In terms of biological role, involved in cell division and chromosome segregation. The protein is Probable cell division protein WhiA of Streptococcus pyogenes serotype M3 (strain ATCC BAA-595 / MGAS315).